Consider the following 277-residue polypeptide: Diaminopimelate epimerase (277 aa).

Residues Asn-13, Gln-46, and Asn-66 each contribute to the substrate site. The active-site Proton donor is the Cys-75. Substrate-binding positions include 76 to 77 (GN), Asn-160, Asn-193, and 211 to 212 (ER). Cys-220 functions as the Proton acceptor in the catalytic mechanism. Residue 221 to 222 (GT) participates in substrate binding.

It belongs to the diaminopimelate epimerase family. In terms of assembly, homodimer.

The protein resides in the cytoplasm. It carries out the reaction (2S,6S)-2,6-diaminopimelate = meso-2,6-diaminopimelate. It participates in amino-acid biosynthesis; L-lysine biosynthesis via DAP pathway; DL-2,6-diaminopimelate from LL-2,6-diaminopimelate: step 1/1. Its function is as follows. Catalyzes the stereoinversion of LL-2,6-diaminopimelate (L,L-DAP) to meso-diaminopimelate (meso-DAP), a precursor of L-lysine and an essential component of the bacterial peptidoglycan. This chain is Diaminopimelate epimerase, found in Saccharophagus degradans (strain 2-40 / ATCC 43961 / DSM 17024).